Here is a 166-residue protein sequence, read N- to C-terminus: Coiled-coil domain-containing protein 12 (166 aa).

Methionine 1 carries the N-acetylmethionine modification. A disordered region spans residues methionine 1–glutamate 56. Positions valine 8–lysine 28 form a coiled coil. Over residues arginine 10–glutamate 56 the composition is skewed to basic and acidic residues. Lysine 53 carries the N6-acetyllysine modification. Lysine 94 is covalently cross-linked (Glycyl lysine isopeptide (Lys-Gly) (interchain with G-Cter in SUMO2)). Residues lysine 117–lysine 144 are a coiled coil. The interval glutamate 147 to aspartate 166 is disordered. Phosphoserine is present on residues serine 149 and serine 165.

The chain is Coiled-coil domain-containing protein 12 (CCDC12) from Homo sapiens (Human).